A 256-amino-acid polypeptide reads, in one-letter code: Undecaprenyl-diphosphatase 2 (256 aa).

A run of 8 helical transmembrane segments spans residues 1 to 21 (MDIF…FLPI), 38 to 58 (ATAT…LAVL), 70 to 90 (LNLW…AFIF), 97 to 117 (LFNV…FLLL), 134 to 154 (VTYK…IPGT), 175 to 195 (AEFS…YDLL), 208 to 228 (ALAV…KLFI), and 236 to 256 (FVSF…IAYV).

It belongs to the UppP family.

It localises to the cell inner membrane. The catalysed reaction is di-trans,octa-cis-undecaprenyl diphosphate + H2O = di-trans,octa-cis-undecaprenyl phosphate + phosphate + H(+). Catalyzes the dephosphorylation of undecaprenyl diphosphate (UPP). Confers resistance to bacitracin. The protein is Undecaprenyl-diphosphatase 2 of Pseudoalteromonas translucida (strain TAC 125).